Reading from the N-terminus, the 250-residue chain is Imidazole glycerol phosphate synthase subunit HisF (250 aa).

Active-site residues include Asp-11 and Asp-130.

It belongs to the HisA/HisF family. As to quaternary structure, heterodimer of HisH and HisF.

Its subcellular location is the cytoplasm. The enzyme catalyses 5-[(5-phospho-1-deoxy-D-ribulos-1-ylimino)methylamino]-1-(5-phospho-beta-D-ribosyl)imidazole-4-carboxamide + L-glutamine = D-erythro-1-(imidazol-4-yl)glycerol 3-phosphate + 5-amino-1-(5-phospho-beta-D-ribosyl)imidazole-4-carboxamide + L-glutamate + H(+). It participates in amino-acid biosynthesis; L-histidine biosynthesis; L-histidine from 5-phospho-alpha-D-ribose 1-diphosphate: step 5/9. IGPS catalyzes the conversion of PRFAR and glutamine to IGP, AICAR and glutamate. The HisF subunit catalyzes the cyclization activity that produces IGP and AICAR from PRFAR using the ammonia provided by the HisH subunit. This is Imidazole glycerol phosphate synthase subunit HisF from Bacteroides fragilis (strain YCH46).